The following is a 477-amino-acid chain: C3a anaphylatoxin chemotactic receptor (477 aa).

Topologically, residues 1–23 (MESFDADTNSTDLHSRPLFQPQD) are extracellular. N9 is a glycosylation site (N-linked (GlcNAc...) asparagine). Residues 24–46 (IASMVILGLTCLLGLLGNGLVLW) form a helical membrane-spanning segment. Residues 47 to 57 (VAGVKMKTTVN) are Cytoplasmic-facing. Residues 58–80 (TVWFLHLTLADFLCCLSLPFSLA) traverse the membrane as a helical segment. Topologically, residues 81–96 (HLILQGHWPYGLFLCK) are extracellular. The cysteines at positions 95 and 172 are disulfide-linked. Residues 97-118 (LIPSIIILNMFASVFLLTAISL) traverse the membrane as a helical segment. The Cytoplasmic portion of the chain corresponds to 119–139 (DRCLIVHKPIWCQNHRNVRTA). The chain crosses the membrane as a helical span at residues 140–160 (FAICGCVWVVAFVMCVPVFVY). Topologically, residues 161-333 (RDLFIMDNRS…TPLMAITITR (173 aa)) are extracellular. N-linked (GlcNAc...) asparagine glycosylation is present at N168. Sulfotyrosine is present on residues Y174 and Y184. N-linked (GlcNAc...) asparagine glycosylation is found at N197 and N201. Y312 is subject to Sulfotyrosine. A helical membrane pass occupies residues 334-353 (LVVGFLVPFFIMVICYSLIV). Residues 354 to 370 (FRMRKTNFTKSRNKTFR) lie on the Cytoplasmic side of the membrane. The chain crosses the membrane as a helical span at residues 371 to 393 (VAVAVVTVFFICWTPYHLVGVLL). At 394 to 410 (LITDPESSLGEAVMSWD) the chain is on the extracellular side. Residues 411–431 (HMSIALASANSCFNPFLYALL) form a helical membrane-spanning segment. The Cytoplasmic segment spans residues 432–477 (GKDFRKKARQSIKGILEAAFSEELTHSTNCTQDKASSKRNNMSTDV). S452 bears the Phosphoserine mark. Residue T456 is modified to Phosphothreonine.

Belongs to the G-protein coupled receptor 1 family. In terms of assembly, interacts with VGF-derived peptide TLQP-21. As to expression, detected in varying levels in all tissues examined except the spleen. Especially abundant in heart and lung.

Its subcellular location is the cell membrane. Functionally, receptor for the chemotactic and inflammatory peptide anaphylatoxin C3a. This receptor stimulates chemotaxis, granule enzyme release and superoxide anion production. In Mus musculus (Mouse), this protein is C3a anaphylatoxin chemotactic receptor (C3ar1).